The sequence spans 133 residues: ATP synthase epsilon chain (133 aa).

This sequence belongs to the ATPase epsilon chain family. In terms of assembly, F-type ATPases have 2 components, CF(1) - the catalytic core - and CF(0) - the membrane proton channel. CF(1) has five subunits: alpha(3), beta(3), gamma(1), delta(1), epsilon(1). CF(0) has three main subunits: a, b and c.

The protein localises to the cell membrane. Its function is as follows. Produces ATP from ADP in the presence of a proton gradient across the membrane. This chain is ATP synthase epsilon chain (atpC), found in Alkalihalophilus pseudofirmus (strain ATCC BAA-2126 / JCM 17055 / OF4) (Bacillus pseudofirmus).